The primary structure comprises 144 residues: Virulence protein STM3117 (144 aa).

The VOC domain maps to 23–143 (RIDHLVLTVS…DGNLIEISQY (121 aa)).

Is critically involved in promoting the replication of S.typhimurium cells inside host macrophages, suggesting a role in the establishment of bacterial colonization within macrophages. May be involved in the biosynthesis and modification of the peptidoglycan layer of the cell wall. The protein is Virulence protein STM3117 of Salmonella typhimurium (strain LT2 / SGSC1412 / ATCC 700720).